Reading from the N-terminus, the 250-residue chain is 2,3-bisphosphoglycerate-dependent phosphoglycerate mutase (250 aa).

Substrate contacts are provided by residues 10–17 (RHGESQWN), 23–24 (TG), R62, 89–92 (ERHY), K100, 116–117 (RR), and 185–186 (GN). The Tele-phosphohistidine intermediate role is filled by H11. E89 acts as the Proton donor/acceptor in catalysis.

The protein belongs to the phosphoglycerate mutase family. BPG-dependent PGAM subfamily. In terms of assembly, homodimer.

It catalyses the reaction (2R)-2-phosphoglycerate = (2R)-3-phosphoglycerate. It participates in carbohydrate degradation; glycolysis; pyruvate from D-glyceraldehyde 3-phosphate: step 3/5. In terms of biological role, catalyzes the interconversion of 2-phosphoglycerate and 3-phosphoglycerate. The polypeptide is 2,3-bisphosphoglycerate-dependent phosphoglycerate mutase (Citrobacter koseri (strain ATCC BAA-895 / CDC 4225-83 / SGSC4696)).